Reading from the N-terminus, the 250-residue chain is HGSTKWCPSPDAAQKYACCHHGMATYVLGSENEMPWKFDRAYKSDITHVMDEMKLHYTDKYHVEYKISDMTGAEVTDIKLESSVVFEPGLGKYGEGRAWIEPVTSAVRIRKNLNDLSGDELILRNYIKQMTKDGSYQQIAAFHGLPAQCPSEDGTTVHTCCLHGMPTFPHWHRLYVALVEDELLSRGSRSGRPYWDWIDPFDRLPDFFNDATYYNSRTLHIESNPFFRGSMSFANTLTDRDAQDVIYNNH.

H1 is a Cu cation binding site. A unit C region spans residues 1–106 (HGSTKWCPSP…RAWIEPVTSA (106 aa)). C7 and C18 are oxidised to a cystine. A cross-link (2'-(S-cysteinyl)-histidine (Cys-His)) is located at residues 19-21 (CHH). Cu cation-binding residues include H21 and H143. A unit D region spans residues 107–250 (VRIRKNLNDL…DAQDVIYNNH (144 aa)). A disulfide bridge connects residues C149 and C160. Positions 161 to 163 (CLH) form a cross-link, 2'-(S-cysteinyl)-histidine (Cys-His). H172 provides a ligand contact to Cu cation.

It belongs to the tyrosinase family. Hemocyanin subfamily. Decamers of large identical subunits (390 kDa), each containing 8 globular oxygen-binding functional units. Requires Cu(2+) as cofactor.

Functionally, hemocyanins are copper-containing oxygen carriers occurring freely dissolved in the hemolymph of many mollusks and arthropods. The protein is Hemocyanin, units C and D of Sepia officinalis (Common cuttlefish).